Reading from the N-terminus, the 372-residue chain is MPLPDFHVSEPFTLGIELEMQVVNPPGYDLSQDSSMLIDAVKNEITAGEVKHDITESMLELATDVCRDINQAAGQFSAMQKVVLQAAADHHLEICGGGTHPFQKWQRQEVCENERYQRTLENFGYLIQQATVFGQHVHVGCASGDDAIYLLHGLSRFVPHFIALSAASPYMQGTDTRFASSRPNIFSAFPDNGPMPWVSNWQQFEALFRCLSYTTMIDSIKDLHWDIRPSPHFGTVEVRVMDTPLTLSHAVNMAGLIQATAHWLLTERPFKHQEKDYLLYKFNRFQACRYGLEGVITDPHTGDRRPLTEDTLRLLEKIAPSAHKMGASSAIEALHRQVVSGLNEAQLMRDFVADGGSLIGLVKKHCEIWAGD.

This sequence belongs to the glutamate--cysteine ligase type 2 family. YbdK subfamily. In terms of assembly, homodimer.

It carries out the reaction L-cysteine + L-glutamate + ATP = gamma-L-glutamyl-L-cysteine + ADP + phosphate + H(+). In terms of biological role, ATP-dependent carboxylate-amine ligase which exhibits weak glutamate--cysteine ligase activity. The polypeptide is Putative glutamate--cysteine ligase 2 (ybdK) (Escherichia coli (strain 55989 / EAEC)).